A 428-amino-acid polypeptide reads, in one-letter code: Probable mannosyltransferase YUR1 (428 aa).

Residues 1–3 (MAK) lie on the Cytoplasmic side of the membrane. The chain crosses the membrane as a helical; Signal-anchor for type II membrane protein span at residues 4-24 (GGSLYIVGIFLPIWTFMIYIF). Positions 25–88 (GKELFLIRKY…TRQNDSDSFH (64 aa)) are stem region. Residues 25 to 428 (GKELFLIRKY…YFLKEEQDEI (404 aa)) are Lumenal-facing. 4 N-linked (GlcNAc...) asparagine glycosylation sites follow: Asn77, Asn82, Asn92, and Asn167. A catalytic region spans residues 89–428 (LRENATILML…YFLKEEQDEI (340 aa)). Catalysis depends on Glu313, which acts as the Nucleophile. Asn414 is a glycosylation site (N-linked (GlcNAc...) asparagine).

Belongs to the glycosyltransferase 15 family.

It localises to the golgi apparatus membrane. It functions in the pathway protein modification; protein glycosylation. In terms of biological role, possible glycosyltransferase involved in N-linked glycosylation. Transfers an alpha-D-mannosyl residue from GDP-mannose into lipid-linked oligosaccharide, forming an alpha-(1-&gt;2)-D-mannosyl-D-mannose linkage. The polypeptide is Probable mannosyltransferase YUR1 (YUR1) (Saccharomyces cerevisiae (strain ATCC 204508 / S288c) (Baker's yeast)).